Consider the following 357-residue polypeptide: tRNA-specific 2-thiouridylase MnmA (357 aa).

ATP contacts are provided by residues 7–14 (AMSGGVDS) and Met-33. The active-site Nucleophile is the Cys-101. Cys-101 and Cys-198 are oxidised to a cystine. Gly-125 contacts ATP. The tract at residues 148–150 (KDQ) is interaction with tRNA. Residue Cys-198 is the Cysteine persulfide intermediate of the active site.

It belongs to the MnmA/TRMU family.

It is found in the cytoplasm. It catalyses the reaction S-sulfanyl-L-cysteinyl-[protein] + uridine(34) in tRNA + AH2 + ATP = 2-thiouridine(34) in tRNA + L-cysteinyl-[protein] + A + AMP + diphosphate + H(+). Catalyzes the 2-thiolation of uridine at the wobble position (U34) of tRNA, leading to the formation of s(2)U34. This is tRNA-specific 2-thiouridylase MnmA from Herpetosiphon aurantiacus (strain ATCC 23779 / DSM 785 / 114-95).